A 265-amino-acid polypeptide reads, in one-letter code: Undecaprenyl-diphosphatase (265 aa).

The next 8 membrane-spanning stretches (helical) occupy residues 15–37, 41–61, 85–105, 109–129, 144–164, 183–203, 218–238, and 244–264; these read GLTE…LLEY, KAES…VFLY, YLLA…HSFI, LFGP…ILAV, VSPA…WPGF, LAAE…TGYD, FWAV…KGFI, and VTFR…LLFW.

The protein belongs to the UppP family.

It is found in the cell inner membrane. It carries out the reaction di-trans,octa-cis-undecaprenyl diphosphate + H2O = di-trans,octa-cis-undecaprenyl phosphate + phosphate + H(+). Functionally, catalyzes the dephosphorylation of undecaprenyl diphosphate (UPP). Confers resistance to bacitracin. This chain is Undecaprenyl-diphosphatase, found in Oleidesulfovibrio alaskensis (strain ATCC BAA-1058 / DSM 17464 / G20) (Desulfovibrio alaskensis).